Here is a 359-residue protein sequence, read N- to C-terminus: Chorismate synthase (359 aa).

Residue Arg47 participates in NADP(+) binding. FMN contacts are provided by residues 123–125, Gly283, 298–302, and Arg326; these read RSS and KPTSS.

This sequence belongs to the chorismate synthase family. Homotetramer. The cofactor is FMNH2.

It catalyses the reaction 5-O-(1-carboxyvinyl)-3-phosphoshikimate = chorismate + phosphate. Its pathway is metabolic intermediate biosynthesis; chorismate biosynthesis; chorismate from D-erythrose 4-phosphate and phosphoenolpyruvate: step 7/7. Its function is as follows. Catalyzes the anti-1,4-elimination of the C-3 phosphate and the C-6 proR hydrogen from 5-enolpyruvylshikimate-3-phosphate (EPSP) to yield chorismate, which is the branch point compound that serves as the starting substrate for the three terminal pathways of aromatic amino acid biosynthesis. This reaction introduces a second double bond into the aromatic ring system. The sequence is that of Chorismate synthase from Chlamydia caviae (strain ATCC VR-813 / DSM 19441 / 03DC25 / GPIC) (Chlamydophila caviae).